We begin with the raw amino-acid sequence, 366 residues long: Chorismate synthase (366 aa).

Residue R48 participates in NADP(+) binding. Residues 125–127 (RSS), 241–242 (NA), G285, 300–304 (KPTSS), and R326 contribute to the FMN site.

This sequence belongs to the chorismate synthase family. In terms of assembly, homotetramer. FMNH2 is required as a cofactor.

It catalyses the reaction 5-O-(1-carboxyvinyl)-3-phosphoshikimate = chorismate + phosphate. Its pathway is metabolic intermediate biosynthesis; chorismate biosynthesis; chorismate from D-erythrose 4-phosphate and phosphoenolpyruvate: step 7/7. In terms of biological role, catalyzes the anti-1,4-elimination of the C-3 phosphate and the C-6 proR hydrogen from 5-enolpyruvylshikimate-3-phosphate (EPSP) to yield chorismate, which is the branch point compound that serves as the starting substrate for the three terminal pathways of aromatic amino acid biosynthesis. This reaction introduces a second double bond into the aromatic ring system. This Paracoccus denitrificans (strain Pd 1222) protein is Chorismate synthase.